The chain runs to 78 residues: Acyl carrier protein (78 aa).

One can recognise a Carrier domain in the interval 1–76; that stretch reads MSLEERVKEI…DVINYLKEKV (76 aa). Residue S36 is modified to O-(pantetheine 4'-phosphoryl)serine.

The protein belongs to the acyl carrier protein (ACP) family. In terms of processing, 4'-phosphopantetheine is transferred from CoA to a specific serine of apo-ACP by AcpS. This modification is essential for activity because fatty acids are bound in thioester linkage to the sulfhydryl of the prosthetic group.

The protein localises to the cytoplasm. It participates in lipid metabolism; fatty acid biosynthesis. Carrier of the growing fatty acid chain in fatty acid biosynthesis. This chain is Acyl carrier protein, found in Aquifex aeolicus (strain VF5).